The primary structure comprises 182 residues: Ribosome maturation factor RimM (182 aa).

The PRC barrel domain occupies 102–182 (EEGDYYWKDL…TIEVDWDPGF (81 aa)).

It belongs to the RimM family. As to quaternary structure, binds ribosomal protein uS19.

The protein localises to the cytoplasm. Functionally, an accessory protein needed during the final step in the assembly of 30S ribosomal subunit, possibly for assembly of the head region. Essential for efficient processing of 16S rRNA. May be needed both before and after RbfA during the maturation of 16S rRNA. It has affinity for free ribosomal 30S subunits but not for 70S ribosomes. The protein is Ribosome maturation factor RimM of Klebsiella pneumoniae (strain 342).